The chain runs to 522 residues: Zinc finger and BTB domain-containing protein 18 (522 aa).

In terms of domain architecture, BTB spans 24-91 (CDCTVLVGDA…MYEGKLQFKD (68 aa)). Positions 121–143 (ATTEADSTKKEEDASSCSDKVES) are enriched in basic and acidic residues. The tract at residues 121 to 165 (ATTEADSTKKEEDASSCSDKVESLSDGSSHMAGDLPSDEDEGEDE) is disordered. Ser-157 carries the post-translational modification Phosphoserine. Lys-273 is covalently cross-linked (Glycyl lysine isopeptide (Lys-Gly) (interchain with G-Cter in SUMO2)). The interval 310-427 (EPAHLAPLRE…TFSCMYTLKR (118 aa)) is interaction with DNMT3A. C2H2-type zinc fingers lie at residues 370–392 (FMCP…LSTH), 410–432 (PTCS…ERTH), 438–460 (YTCT…AVVH), and 466–489 (HACK…RKFH). Phosphoserine occurs at positions 516 and 517.

It belongs to the krueppel C2H2-type zinc-finger protein family. ZBTB18 subfamily. As to quaternary structure, interacts with DNMT3A.

Its subcellular location is the nucleus. Transcriptional repressor that plays a role in various developmental processes such as myogenesis and brain development. Specifically binds the consensus DNA sequence 5'-[AC]ACATCTG[GT][AC]-3' which contains the E box core, and acts by recruiting chromatin remodeling multiprotein complexes. Plays a key role in myogenesis by directly repressing the expression of ID2 and ID3, 2 inhibitors of skeletal myogenesis. Also involved in controlling cell division of progenitor cells and regulating the survival of postmitotic cortical neurons. May also play a role in the organization of chromosomes in the nucleus. This Bos taurus (Bovine) protein is Zinc finger and BTB domain-containing protein 18 (ZBTB18).